The chain runs to 240 residues: Ribonuclease P protein component 3 (240 aa).

It belongs to the eukaryotic/archaeal RNase P protein component 3 family. As to quaternary structure, consists of a catalytic RNA component and at least 4-5 protein subunits.

The protein localises to the cytoplasm. It carries out the reaction Endonucleolytic cleavage of RNA, removing 5'-extranucleotides from tRNA precursor.. Part of ribonuclease P, a protein complex that generates mature tRNA molecules by cleaving their 5'-ends. The sequence is that of Ribonuclease P protein component 3 from Halorubrum lacusprofundi (strain ATCC 49239 / DSM 5036 / JCM 8891 / ACAM 34).